The following is a 362-amino-acid chain: Probable dual-specificity RNA methyltransferase RlmN (362 aa).

E105 functions as the Proton acceptor in the catalytic mechanism. One can recognise a Radical SAM core domain in the interval 111–344; it reads HEYGNSICVT…VTIRREQGHD (234 aa). The cysteines at positions 118 and 349 are disulfide-linked. C125, C129, and C132 together coordinate [4Fe-4S] cluster. S-adenosyl-L-methionine-binding positions include 175–176, S207, 230–232, and N306; these read GE and SLH. C349 acts as the S-methylcysteine intermediate in catalysis.

It belongs to the radical SAM superfamily. RlmN family. It depends on [4Fe-4S] cluster as a cofactor.

Its subcellular location is the cytoplasm. The enzyme catalyses adenosine(2503) in 23S rRNA + 2 reduced [2Fe-2S]-[ferredoxin] + 2 S-adenosyl-L-methionine = 2-methyladenosine(2503) in 23S rRNA + 5'-deoxyadenosine + L-methionine + 2 oxidized [2Fe-2S]-[ferredoxin] + S-adenosyl-L-homocysteine. The catalysed reaction is adenosine(37) in tRNA + 2 reduced [2Fe-2S]-[ferredoxin] + 2 S-adenosyl-L-methionine = 2-methyladenosine(37) in tRNA + 5'-deoxyadenosine + L-methionine + 2 oxidized [2Fe-2S]-[ferredoxin] + S-adenosyl-L-homocysteine. Its function is as follows. Specifically methylates position 2 of adenine 2503 in 23S rRNA and position 2 of adenine 37 in tRNAs. The protein is Probable dual-specificity RNA methyltransferase RlmN of Bacillus cereus (strain B4264).